The chain runs to 255 residues: 4-diphosphocytidyl-2-C-methyl-D-erythritol kinase (255 aa).

Residue lysine 6 is part of the active site. An ATP-binding site is contributed by 95–105 (PVCAGLGGGSS). Aspartate 137 is a catalytic residue.

It belongs to the GHMP kinase family. IspE subfamily.

It carries out the reaction 4-CDP-2-C-methyl-D-erythritol + ATP = 4-CDP-2-C-methyl-D-erythritol 2-phosphate + ADP + H(+). The protein operates within isoprenoid biosynthesis; isopentenyl diphosphate biosynthesis via DXP pathway; isopentenyl diphosphate from 1-deoxy-D-xylulose 5-phosphate: step 3/6. Its function is as follows. Catalyzes the phosphorylation of the position 2 hydroxy group of 4-diphosphocytidyl-2C-methyl-D-erythritol. This chain is 4-diphosphocytidyl-2-C-methyl-D-erythritol kinase, found in Campylobacter jejuni subsp. jejuni serotype O:23/36 (strain 81-176).